Reading from the N-terminus, the 150-residue chain is 3-hydroxyacyl-[acyl-carrier-protein] dehydratase FabZ (150 aa).

His-54 is a catalytic residue.

This sequence belongs to the thioester dehydratase family. FabZ subfamily.

The protein resides in the cytoplasm. The catalysed reaction is a (3R)-hydroxyacyl-[ACP] = a (2E)-enoyl-[ACP] + H2O. In terms of biological role, involved in unsaturated fatty acids biosynthesis. Catalyzes the dehydration of short chain beta-hydroxyacyl-ACPs and long chain saturated and unsaturated beta-hydroxyacyl-ACPs. In Psychromonas ingrahamii (strain DSM 17664 / CCUG 51855 / 37), this protein is 3-hydroxyacyl-[acyl-carrier-protein] dehydratase FabZ.